Reading from the N-terminus, the 878-residue chain is AP-5 complex subunit beta-1 (878 aa).

The interval 234 to 260 (RLQPQAPSWPAAEEGEGERSLTAREHS) is disordered. The segment covering 250-260 (GERSLTAREHS) has biased composition (basic and acidic residues).

As to quaternary structure, probably part of the adaptor protein complex 5 (AP-5), a tetramer composed of AP5B1, AP5M1, AP5S1 and AP5Z1. Interacts with ZFYVE26 and SPG11.

Functionally, as part of AP-5, a probable fifth adaptor protein complex it may be involved in endosomal transport. The chain is AP-5 complex subunit beta-1 (AP5B1) from Homo sapiens (Human).